The following is a 416-amino-acid chain: Diaminopimelate decarboxylase (416 aa).

The residue at position 60 (lysine 60) is an N6-(pyridoxal phosphate)lysine. Pyridoxal 5'-phosphate contacts are provided by residues glycine 240 and 274 to 277 (EPGR). The substrate site is built by arginine 277, arginine 313, and tyrosine 317. Cysteine 343 (proton donor) is an active-site residue. Substrate contacts are provided by glutamate 344 and tyrosine 371. Tyrosine 371 serves as a coordination point for pyridoxal 5'-phosphate.

This sequence belongs to the Orn/Lys/Arg decarboxylase class-II family. LysA subfamily. As to quaternary structure, homodimer. Pyridoxal 5'-phosphate serves as cofactor.

The catalysed reaction is meso-2,6-diaminopimelate + H(+) = L-lysine + CO2. Its pathway is amino-acid biosynthesis; L-lysine biosynthesis via DAP pathway; L-lysine from DL-2,6-diaminopimelate: step 1/1. Specifically catalyzes the decarboxylation of meso-diaminopimelate (meso-DAP) to L-lysine. The chain is Diaminopimelate decarboxylase from Pseudomonas fluorescens.